A 190-amino-acid chain; its full sequence is dCTP deaminase (190 aa).

Residues 111 to 116 (KSTYAR), 135 to 137 (TLE), Gln156, Tyr172, and Gln182 contribute to the dCTP site. Glu137 functions as the Proton donor/acceptor in the catalytic mechanism.

It belongs to the dCTP deaminase family. Homotrimer.

It catalyses the reaction dCTP + H2O + H(+) = dUTP + NH4(+). It functions in the pathway pyrimidine metabolism; dUMP biosynthesis; dUMP from dCTP (dUTP route): step 1/2. Its function is as follows. Catalyzes the deamination of dCTP to dUTP. The sequence is that of dCTP deaminase from Stenotrophomonas maltophilia (strain R551-3).